The chain runs to 381 residues: Cytochrome P450 105C1 (381 aa).

Residue Cys330 coordinates heme.

Belongs to the cytochrome P450 family. It depends on heme as a cofactor.

The protein localises to the cytoplasm. The polypeptide is Cytochrome P450 105C1 (cyp105C1) (Streptomyces sp).